The sequence spans 205 residues: Probable peptidyl-tRNA hydrolase 2 (205 aa).

The span at 40–49 shows a compositional bias: polar residues; the sequence is YSSKNANKAS. The tract at residues 40 to 68 is disordered; it reads YSSKNANKASNPEKESPVSVSNDEDSESE. Phosphoserine is present on residues S65 and S79.

Belongs to the PTH2 family.

It catalyses the reaction an N-acyl-L-alpha-aminoacyl-tRNA + H2O = an N-acyl-L-amino acid + a tRNA + H(+). The natural substrate for this enzyme may be peptidyl-tRNAs which drop off the ribosome during protein synthesis. The sequence is that of Probable peptidyl-tRNA hydrolase 2 from Schizosaccharomyces pombe (strain 972 / ATCC 24843) (Fission yeast).